The following is a 216-amino-acid chain: Uracil-DNA glycosylase (216 aa).

Aspartate 59 (proton acceptor) is an active-site residue.

This sequence belongs to the uracil-DNA glycosylase (UDG) superfamily. UNG family.

It is found in the cytoplasm. The enzyme catalyses Hydrolyzes single-stranded DNA or mismatched double-stranded DNA and polynucleotides, releasing free uracil.. In terms of biological role, excises uracil residues from the DNA which can arise as a result of misincorporation of dUMP residues by DNA polymerase or due to deamination of cytosine. The protein is Uracil-DNA glycosylase of Idiomarina loihiensis (strain ATCC BAA-735 / DSM 15497 / L2-TR).